The sequence spans 523 residues: NAD(P)H-quinone oxidoreductase subunit 2 (523 aa).

The next 13 membrane-spanning stretches (helical) occupy residues 30 to 50, 57 to 77, 94 to 114, 128 to 148, 182 to 202, 223 to 243, 255 to 275, 291 to 311, 317 to 337, 345 to 365, 389 to 409, 424 to 444, and 477 to 497; these read VGPE…DLAG, WVPP…ALQW, LAIA…LISW, AAIL…TDLV, LLVG…LYGL, AALA…AVPF, PTPV…ALAL, LLFT…ALAQ, MLAY…VCGT, VLYM…IILF, LGLS…GFFG, VLVV…IGVI, and VALV…NPLF.

This sequence belongs to the complex I subunit 2 family. NDH-1 can be composed of about 15 different subunits; different subcomplexes with different compositions have been identified which probably have different functions.

Its subcellular location is the cellular thylakoid membrane. The catalysed reaction is a plastoquinone + NADH + (n+1) H(+)(in) = a plastoquinol + NAD(+) + n H(+)(out). It catalyses the reaction a plastoquinone + NADPH + (n+1) H(+)(in) = a plastoquinol + NADP(+) + n H(+)(out). Its function is as follows. NDH-1 shuttles electrons from an unknown electron donor, via FMN and iron-sulfur (Fe-S) centers, to quinones in the respiratory and/or the photosynthetic chain. The immediate electron acceptor for the enzyme in this species is believed to be plastoquinone. Couples the redox reaction to proton translocation, and thus conserves the redox energy in a proton gradient. Cyanobacterial NDH-1 also plays a role in inorganic carbon-concentration. This is NAD(P)H-quinone oxidoreductase subunit 2 from Synechococcus sp. (strain CC9311).